Here is a 108-residue protein sequence, read N- to C-terminus: U3-lycotoxin-Ls1w (108 aa).

The first 20 residues, 1-20 (MKFVLLFGVLLVTLFSYSSA), serve as a signal peptide directing secretion. Positions 21–44 (EMLDDFDQADEDELLSLIEKEEAR) are excised as a propeptide. 4 disulfide bridges follow: C48–C63, C55–C72, C62–C87, and C74–C85.

Belongs to the neurotoxin 19 (CSTX) family. 01 subfamily. Expressed by the venom gland.

It localises to the secreted. The sequence is that of U3-lycotoxin-Ls1w from Lycosa singoriensis (Wolf spider).